Here is a 420-residue protein sequence, read N- to C-terminus: Glucose-1-phosphate adenylyltransferase (420 aa).

Residues Tyr107, Gly172, 187–188, and Ser205 contribute to the alpha-D-glucose 1-phosphate site; that span reads EK.

Belongs to the bacterial/plant glucose-1-phosphate adenylyltransferase family. As to quaternary structure, homotetramer.

The catalysed reaction is alpha-D-glucose 1-phosphate + ATP + H(+) = ADP-alpha-D-glucose + diphosphate. It participates in glycan biosynthesis; glycogen biosynthesis. Its function is as follows. Involved in the biosynthesis of ADP-glucose, a building block required for the elongation reactions to produce glycogen. Catalyzes the reaction between ATP and alpha-D-glucose 1-phosphate (G1P) to produce pyrophosphate and ADP-Glc. The sequence is that of Glucose-1-phosphate adenylyltransferase from Rhodopseudomonas palustris (strain BisB18).